Here is a 446-residue protein sequence, read N- to C-terminus: RUN domain-containing protein 3A (446 aa).

The segment at 1 to 298 is interaction with RAP2A; it reads MEASFVQTTM…LQLQLEEAAA (298 aa). One can recognise an RUN domain in the interval 52–189; it reads DDSSEEFVNF…IDFSFCLKGE (138 aa). Phosphothreonine is present on threonine 215. The interval 216–239 is disordered; that stretch reads DEEERHSAESSTSEDNSPEHPYLP. Serine 232 bears the Phosphoserine mark. Residues 267–322 adopt a coiled-coil conformation; sequence YLEELVRLRESQLKDLEAENRRLQLQLEEAAAQNQREKRELEGVILELQEQLTGLI. Positions 372-384 are enriched in polar residues; it reads PLSAEASLSSDSQ. Residues 372-404 are disordered; it reads PLSAEASLSSDSQRLGEGTRDEEPWGPIGKDPT. Serine 416 and serine 419 each carry phosphoserine.

Belongs to the RUNDC3 family. Interacts with the GTP-bound form of RAP2A.

Its function is as follows. May act as an effector of RAP2A in neuronal cells. This is RUN domain-containing protein 3A (RUNDC3A) from Homo sapiens (Human).